The sequence spans 142 residues: Putative pre-16S rRNA nuclease (142 aa).

Belongs to the YqgF nuclease family.

It localises to the cytoplasm. Functionally, could be a nuclease involved in processing of the 5'-end of pre-16S rRNA. This Azotobacter vinelandii (strain DJ / ATCC BAA-1303) protein is Putative pre-16S rRNA nuclease.